Here is a 376-residue protein sequence, read N- to C-terminus: Chaperone protein DnaJ (376 aa).

The region spanning 5-70 (DYYEILGVSK…QKRAAYDQYG (66 aa)) is the J domain. The CR-type zinc finger occupies 131 to 209 (GVTKEIRIPT…CHGHGRVERS (79 aa)). Zn(2+)-binding residues include C144, C147, C161, C164, C183, C186, C197, and C200. CXXCXGXG motif repeat units lie at residues 144–151 (CDVCHGSG), 161–168 (CPTCHGSG), 183–190 (CPHCQGRG), and 197–204 (CNKCHGHG).

This sequence belongs to the DnaJ family. Homodimer. Requires Zn(2+) as cofactor.

Its subcellular location is the cytoplasm. Participates actively in the response to hyperosmotic and heat shock by preventing the aggregation of stress-denatured proteins and by disaggregating proteins, also in an autonomous, DnaK-independent fashion. Unfolded proteins bind initially to DnaJ; upon interaction with the DnaJ-bound protein, DnaK hydrolyzes its bound ATP, resulting in the formation of a stable complex. GrpE releases ADP from DnaK; ATP binding to DnaK triggers the release of the substrate protein, thus completing the reaction cycle. Several rounds of ATP-dependent interactions between DnaJ, DnaK and GrpE are required for fully efficient folding. Also involved, together with DnaK and GrpE, in the DNA replication of plasmids through activation of initiation proteins. This is Chaperone protein DnaJ from Escherichia coli (strain K12 / DH10B).